The primary structure comprises 421 residues: Alpha-tubulin N-acetyltransferase 1 (421 aa).

The N-acetyltransferase domain occupies 1-190 (MEFPFDVDAL…NNFVIFEGFF (190 aa)). An N6-acetyllysine; by autocatalysis modification is found at Lys-56. Acetyl-CoA is bound at residue 124–137 (FYIHESVQRHGHGR). An N6-acetyllysine; by autocatalysis modification is found at Lys-146. 160-169 (SPKLLKFLNK) is a binding site for acetyl-CoA. A disordered region spans residues 214–235 (PIPAAPARKLPPKRAEGDIKPY). Residues 226–235 (KRAEGDIKPY) are compositionally biased toward basic and acidic residues. Residues Lys-233 and Lys-244 each carry the N6-acetyllysine; by autocatalysis modification. The interval 252 to 284 (PLNRAPRRATPPAHPPPRSSSLGNSPDRGPLRP) is disordered. Residues Ser-272 and Ser-276 each carry the phosphoserine modification. The residue at position 305 (Arg-305) is an Asymmetric dimethylarginine. A Phosphoserine modification is found at Ser-315. An Omega-N-methylarginine modification is found at Arg-323. Residues 342–351 (FNTSFLGTGN) are compositionally biased toward polar residues. The segment at 342–398 (FNTSFLGTGNQERKQGEQEAEDRSASEDQVLLQDGSGEEPTHTVAPRAQAPPAQSWM) is disordered. A compositionally biased stretch (basic and acidic residues) spans 352 to 367 (QERKQGEQEAEDRSAS).

The protein belongs to the acetyltransferase ATAT1 family. Component of the BBSome complex. Interacts with AP2 alpha-adaptins, including AP2A2, but not with AP1 gamma-adaptin (AP1G1/AP1G2); this interaction is required for efficient alpha-tubulin acetylation, hence clathrin-coated pits are sites of microtubule acetylation. Post-translationally, autoacetylation strongly increases tubulin acetylation.

The protein resides in the cytoplasm. Its subcellular location is the membrane. It is found in the clathrin-coated pit. It localises to the cell junction. The protein localises to the focal adhesion. The protein resides in the cell projection. Its subcellular location is the axon. It is found in the cytoskeleton. It localises to the spindle. The enzyme catalyses L-lysyl-[alpha-tubulin] + acetyl-CoA = N(6)-acetyl-L-lysyl-[alpha-tubulin] + CoA + H(+). Its function is as follows. Specifically acetylates 'Lys-40' in alpha-tubulin on the lumenal side of microtubules. Promotes microtubule destabilization and accelerates microtubule dynamics; this activity may be independent of acetylation activity. Acetylates alpha-tubulin with a slow enzymatic rate, due to a catalytic site that is not optimized for acetyl transfer. Enters the microtubule through each end and diffuses quickly throughout the lumen of microtubules. Acetylates only long/old microtubules because of its slow acetylation rate since it does not have time to act on dynamically unstable microtubules before the enzyme is released. Required for normal sperm flagellar function. Promotes directional cell locomotion and chemotaxis, through AP2A2-dependent acetylation of alpha-tubulin at clathrin-coated pits that are concentrated at the leading edge of migrating cells. May facilitate primary cilium assembly. The sequence is that of Alpha-tubulin N-acetyltransferase 1 from Rattus norvegicus (Rat).